A 188-amino-acid chain; its full sequence is dCTP deaminase (188 aa).

DCTP contacts are provided by residues 111–116, 135–137, Gln-156, Tyr-170, and Gln-180; these read KSTYAR and TLE. The active-site Proton donor/acceptor is Glu-137.

The protein belongs to the dCTP deaminase family. Homotrimer.

It catalyses the reaction dCTP + H2O + H(+) = dUTP + NH4(+). It participates in pyrimidine metabolism; dUMP biosynthesis; dUMP from dCTP (dUTP route): step 1/2. Functionally, catalyzes the deamination of dCTP to dUTP. This chain is dCTP deaminase, found in Cupriavidus pinatubonensis (strain JMP 134 / LMG 1197) (Cupriavidus necator (strain JMP 134)).